Consider the following 240-residue polypeptide: 1-(5-phosphoribosyl)-5-[(5-phosphoribosylamino)methylideneamino] imidazole-4-carboxamide isomerase (240 aa).

The active-site Proton acceptor is the D8. The active-site Proton donor is the D129.

The protein belongs to the HisA/HisF family.

It localises to the cytoplasm. The catalysed reaction is 1-(5-phospho-beta-D-ribosyl)-5-[(5-phospho-beta-D-ribosylamino)methylideneamino]imidazole-4-carboxamide = 5-[(5-phospho-1-deoxy-D-ribulos-1-ylimino)methylamino]-1-(5-phospho-beta-D-ribosyl)imidazole-4-carboxamide. The protein operates within amino-acid biosynthesis; L-histidine biosynthesis; L-histidine from 5-phospho-alpha-D-ribose 1-diphosphate: step 4/9. The chain is 1-(5-phosphoribosyl)-5-[(5-phosphoribosylamino)methylideneamino] imidazole-4-carboxamide isomerase from Listeria monocytogenes serotype 4a (strain HCC23).